Consider the following 424-residue polypeptide: UPF0597 protein Shew185_3080 (424 aa).

Belongs to the UPF0597 family.

The protein is UPF0597 protein Shew185_3080 of Shewanella baltica (strain OS185).